The primary structure comprises 362 residues: Neutral protease 2 homolog MEP2 (362 aa).

The first 19 residues, 1-19, serve as a signal peptide directing secretion; it reads MLFPSIVAALAALANPVLS. The propeptide occupies 20-177; that stretch reads LTIPQATGSE…SKAINPISAR (158 aa). 2 disulfides stabilise this stretch: cysteine 184–cysteine 255 and cysteine 262–cysteine 280. Histidine 304 is a Zn(2+) binding site. Residue glutamate 305 is part of the active site. 2 residues coordinate Zn(2+): histidine 308 and aspartate 319.

It belongs to the peptidase M35 family. Requires Zn(2+) as cofactor.

It localises to the secreted. It catalyses the reaction Preferential cleavage of bonds with hydrophobic residues in P1'. Also 3-Asn-|-Gln-4 and 8-Gly-|-Ser-9 bonds in insulin B chain.. In terms of biological role, secreted metalloproteinase that allows assimilation of proteinaceous substrates. Shows high activities on basic nuclear substrates such as histone and protamine. May be involved in virulence. The chain is Neutral protease 2 homolog MEP2 (MEP2) from Coccidioides posadasii (strain C735) (Valley fever fungus).